Reading from the N-terminus, the 170-residue chain is Translationally-controlled tumor protein homolog (170 aa).

The 170-residue stretch at 1–170 (MLIYNDILNG…WKHGLKETKV (170 aa)) folds into the TCTP domain.

The protein belongs to the TCTP family.

The protein localises to the cytoplasm. The protein resides in the cytoskeleton. Involved in protein synthesis. Involved in microtubule stabilization. The sequence is that of Translationally-controlled tumor protein homolog from Gibberella zeae (strain ATCC MYA-4620 / CBS 123657 / FGSC 9075 / NRRL 31084 / PH-1) (Wheat head blight fungus).